Reading from the N-terminus, the 391-residue chain is MKFVDEASILVVAGDGGNGCVSFRREKYIPKGGPDGGDGGDGGDVWLEADENLNTLIDYRFEKSFRAERGQNGASRDCTGKRGKDVTIKVPVGTRVIDQGTGETMGDMTKHGQRLLVAKGGWHGLGNTRFKSSVNRTPRQKTNGTPGDKRDLLLELMLLADVGMLGMPNAGKSTFIRAVSAAKPKVADYPFTTLVPSLGVVRMDSEKSFVVADIPGLIEGAAEGAGLGIRFLKHLERCRVLLHLIDIDPIDGSDPVENARIIIGELEKYSQDLAAKPRWLVFNKIDLMDKTEAEEKAKSIAEALGWEGKYYLISAASQLGVKDLCWDVMTFIIENPIAQAEEAKQPEKVEFMWDDYHRQQLDEVAAEAEDEEWDDDWDEDDEEGVEFIYKR.

An Obg domain is found at 1 to 159; it reads MKFVDEASIL…RDLLLELMLL (159 aa). The interval 127–147 is disordered; sequence NTRFKSSVNRTPRQKTNGTPG. Residues 129 to 145 are compositionally biased toward polar residues; the sequence is RFKSSVNRTPRQKTNGT. The region spanning 160-333 is the OBG-type G domain; it reads ADVGMLGMPN…LCWDVMTFII (174 aa). GTP-binding positions include 166-173, 191-195, 213-216, 283-286, and 314-316; these read GMPNAGKS, FTTLV, DIPG, NKID, and SAA. Mg(2+) is bound by residues Ser-173 and Thr-193.

It belongs to the TRAFAC class OBG-HflX-like GTPase superfamily. OBG GTPase family. Monomer. Requires Mg(2+) as cofactor.

It is found in the cytoplasm. Functionally, an essential GTPase which binds GTP, GDP and possibly (p)ppGpp with moderate affinity, with high nucleotide exchange rates and a fairly low GTP hydrolysis rate. Plays a role in control of the cell cycle, stress response, ribosome biogenesis and in those bacteria that undergo differentiation, in morphogenesis control. The polypeptide is GTPase Obg (Salmonella arizonae (strain ATCC BAA-731 / CDC346-86 / RSK2980)).